We begin with the raw amino-acid sequence, 2131 residues long: Nonribosomal peptide synthetase criC (2131 aa).

The tract at residues 13–407 (FSQQCFQHPD…GRRDRVTKIR (395 aa)) is adenylation 1. Positions 525 to 601 (SGPLTIDQTI…ALVEKNRHET (77 aa)) constitute a Carrier 1 domain. Ser-562 carries the post-translational modification O-(pantetheine 4'-phosphoryl)serine. A disordered region spans residues 598-627 (RHETENRPDSSAFATRTPEESSMPTQGPVT). The tract at residues 625–1018 (PVTPLQKRMV…YMSLLDAFLD (394 aa)) is condensation 1. Residues 1069-1447 (ASLHPTHIAV…GRKDRQVKVR (379 aa)) form an adenylation 2 region. Residues 1569-1647 (SSEAHLEKLI…DLITLVAQQQ (79 aa)) form the Carrier 2 domain. Ser-1607 is modified (O-(pantetheine 4'-phosphoryl)serine). Residues 1688-2086 (SQSQSTFNVP…EALLLECFRM (399 aa)) are condensation 2.

The protein belongs to the NRP synthetase family. Pantetheine 4'-phosphate is required as a cofactor.

The catalysed reaction is L-tryptophan + L-alanine + 2 ATP = cyclo(L-tryptophyl-L-alanyl) + 2 ADP + 2 phosphate + 2 H(+). It functions in the pathway secondary metabolite biosynthesis. The protein operates within alkaloid biosynthesis. Nonribosomal peptide synthetase; part of the gene cluster that mediates the biosynthesis of echinulin family alkaloid. The pathway begins with the biosynthesis of the cyclic dipeptide cyclo-L-Trp-L-Ala (cyclo-TA) by the NRPS criC via condensation of L-alanine and L-tryptophan. The prenyltransferase criA then catalyzes the first prenylation step, a reverse prenylation reaction at C2, to yield preechinulin. Preechinulin is the substrate of the cytochrome P450 monooxygenase criE that catalyzes the formation of the double bond between C10 and C11 to produce neoechulin A. The unique prenyltransferase criF functions as a competitive enzyme with criE for preechinulin metabolization and uses preechinulin for effective regiospecific prenylations. Preechinulin is prenylated by criF at C5 or C7. C7-prenylation leads to accumulation of tardioxopiperazine B without further modification by criF. In contrast, the C5-prenylated tardioxopiperazine A can be prenylated again by criF, predominantly at C7 to form echinulin or less frequently at C4 to give variecolorin L. CriF also accepts neoechilunin A to produce varlecolorin G (prenylation at C5) or isoechinulin A (prenylation at C7). CriF further converts isoechinulin A into dehydroechinulin. Moreover, a yet unidentified enzyme can also convert neoechilunin A into neoechilunin B by introducing a double bond between positions C14 and C17 and thus provides a further substrate to criF for C5 and C7 prenylation. In Aspergillus cristatus (Chinese Fuzhuan brick tea-fermentation fungus), this protein is Nonribosomal peptide synthetase criC.